The sequence spans 556 residues: MKTDIEIAQEATLQPIMDVARSLGIPENEVELYGNYKAKISLKAFERLKERREGKLILVTAINPTPAGEGKTTTTVGLGDALRRLGKKVVIALREPSLGPSFGVKGGAAGGGYAQIVPMEDINLHFTGDFHAVTSAHNLLAAMLDNSLQQGNPLNIDPRQVVFRRVLDLNDRALRKVIVGLGGRTDGIPRESGFDITVASEIMAILCLSKDLMDLKARCAKIVVAYTYDGKPVTAADLEAQGSMAVLLKDAIKPNLVQTLEHTPAFVHGGPFANIAHGCNSVTATQLALKLGDYCVTEAGFGADLGAEKFFNLKCRLAGLKPDCTVIVATVRALKSHGGVAKADLNRENLEALAKGFGNLEKHIENVAKFGVPAVVAINAFPTDTKAELDYVYERCRQMGIDVALSEVWAKGGEGGRELAEKVVAAIETKPSRFRVLYDSSLPIKEKIAAIVREVYGGDAVAYTPEAEKHIKTFTDLGYGALPVCMAKTQYSLSDDMTKIGRPEGFTVTVREVRLSAGAGFLVVITGAIMTMPGLPKRPAACAIDIDENGRIVGLF.

65–72 is an ATP binding site; the sequence is TPAGEGKT.

This sequence belongs to the formate--tetrahydrofolate ligase family.

The enzyme catalyses (6S)-5,6,7,8-tetrahydrofolate + formate + ATP = (6R)-10-formyltetrahydrofolate + ADP + phosphate. Its pathway is one-carbon metabolism; tetrahydrofolate interconversion. The chain is Formate--tetrahydrofolate ligase from Heliobacterium modesticaldum (strain ATCC 51547 / Ice1).